The primary structure comprises 101 residues: Small ribosomal subunit protein bS18c (101 aa).

The protein belongs to the bacterial ribosomal protein bS18 family. Part of the 30S ribosomal subunit.

Its subcellular location is the plastid. It localises to the chloroplast. This is Small ribosomal subunit protein bS18c from Gossypium barbadense (Sea Island cotton).